Reading from the N-terminus, the 115-residue chain is DNA-directed RNA polymerase subunit Rpo4 (115 aa).

This sequence belongs to the eukaryotic RPB4 RNA polymerase subunit family. In terms of assembly, part of the RNA polymerase complex. Forms a stalk with Rpo7 that extends from the main structure.

The protein localises to the cytoplasm. The catalysed reaction is RNA(n) + a ribonucleoside 5'-triphosphate = RNA(n+1) + diphosphate. Functionally, DNA-dependent RNA polymerase (RNAP) catalyzes the transcription of DNA into RNA using the four ribonucleoside triphosphates as substrates. This subunit is less well bound than the others. The sequence is that of DNA-directed RNA polymerase subunit Rpo4 from Methanocaldococcus jannaschii (strain ATCC 43067 / DSM 2661 / JAL-1 / JCM 10045 / NBRC 100440) (Methanococcus jannaschii).